Here is a 317-residue protein sequence, read N- to C-terminus: Succinate receptor 1 (317 aa).

Residues 1-27 (MAQNLSCENWLALENILKKYYLSAFYG) lie on the Extracellular side of the membrane. Residue N4 is glycosylated (N-linked (GlcNAc...) asparagine). Residues 28–48 (IEFIVGMLGNFTVVFGYLFCM) traverse the membrane as a helical segment. Topologically, residues 49–55 (KNWNSSN) are cytoplasmic. Residues 56–76 (VYLFNLSISDLAFLCTLPMLI) form a helical membrane-spanning segment. Residues 77–99 (RSYATGNWTYGDVLCISNRYVLH) are Extracellular-facing. C91 and C168 are disulfide-bonded. The helical transmembrane segment at 100 to 120 (ANLYTSILFLTFISIDRYLLM) threads the bilayer. At 121 to 133 (KFPFREHILQKKE) the chain is on the cytoplasmic side. The chain crosses the membrane as a helical span at residues 134-154 (FAILISLAVWVLVTLEVLPML). Residues 155 to 181 (TFITSTPIEKGDSCVDYASSGNPKYSL) are Extracellular-facing. Residues 182 to 202 (IYSLCLTLLGFLIPLSVMCFF) traverse the membrane as a helical segment. At 203 to 226 (YYKMVVFLKKRSQQQATVLSLNKP) the chain is on the cytoplasmic side. A helical membrane pass occupies residues 227–247 (LRLVVLAVVIFSVLFTPYHIM). Residues 248-276 (RNVRIASRLDSWPQGCSQKAIKCLYILTR) lie on the Extracellular side of the membrane. The helical transmembrane segment at 277–297 (PLAFLNSAVNPIFYFLVGDHF) threads the bilayer. At 298–317 (RDMLFSKLRQYFKSLTSFRL) the chain is on the cytoplasmic side.

Belongs to the G-protein coupled receptor 1 family. In terms of tissue distribution, expressed in retina.

The protein localises to the cell membrane. Its function is as follows. G protein-coupled receptor for succinate able to mediate signaling through Gq/GNAQ or Gi/GNAI second messengers depending on the cell type and the processes regulated. Succinate-SUCNR1 signaling serves as a link between metabolic stress, inflammation and energy homeostasisn. In macrophages, plays a range of immune-regulatory roles. During inflammation, succinate-SUCNR1 signaling may act as an anti-inflammatory mediator or boost inflammation depending on the inflammatory status of cells. Hyperpolarizes M2 macrophages versus M1 phenotype through Gq signaling by regulating the transcription of genes involved in immune function. In activated M1 macrophages, plays a pro-inflammatory role in response to LPS. Expressed in dendritic cells, where it is involved in the sensing of immunological danger and enhances immunity. Mediates succinate triggered intracelleular calcium mobilization, induces migratory responses and acts in synergy with Toll-like receptor ligands for the production of proinflammatory cytokines as well as an enhancement of antigen-specific activation of helper T cells. In the small intestine, mediates the activation of tuft cells by dietary succinate and triggers type 2 immunity. In adipocytes, plays an important role in the control of energy metabolism. In response to succinate, controls leptin expression in an AMPK-JNK-CEBPA-dependent as well as circadian clock-regulated manner. In muscle tissue, is expressed in non-muscle cells and coordinates muscle remodeling in response to the succinate produced during exercise training in a paracrine manner. In retina, acts as a mediator of vessel growth during retinal development. In response to succinate, regulates the production of angiogenic factors, including VEGF, by retinal ganglion neurons. The protein is Succinate receptor 1 (Sucnr1) of Rattus norvegicus (Rat).